The chain runs to 161 residues: Nucleotide-binding protein azo2183 (161 aa).

Belongs to the YajQ family.

Functionally, nucleotide-binding protein. The chain is Nucleotide-binding protein azo2183 from Azoarcus sp. (strain BH72).